Reading from the N-terminus, the 533-residue chain is Phospho-2-dehydro-3-deoxyheptonate aldolase 1, chloroplastic (533 aa).

The N-terminal 57 residues, 1–57 (MALSTNSTTSSLLPKTPLVQQPLLKNASLPTTTKAIRFIQPISAIHSSDSSKNTPIV), are a transit peptide targeting the chloroplast. Polar residues predominate over residues 47 to 56 (SSDSSKNTPI). The tract at residues 47–70 (SSDSSKNTPIVSAKPSSPPAATST) is disordered. Low complexity predominate over residues 57–70 (VSAKPSSPPAATST). Cys145 contributes to the Mn(2+) binding site. Substrate contacts are provided by residues Arg184, 343–344 (ER), Lys366, and Arg397. Residues His429, Glu471, and Asp501 each coordinate Mn(2+).

It belongs to the class-II DAHP synthase family. Homodimer. Mn(2+) serves as cofactor. As to expression, mostly expressed in flowers, especially in petal limbs and tubes, and, to a lower extent, in roots, stems, stigmas, anthers, leaves and sepals.

It is found in the plastid. The protein localises to the chloroplast. It carries out the reaction D-erythrose 4-phosphate + phosphoenolpyruvate + H2O = 7-phospho-2-dehydro-3-deoxy-D-arabino-heptonate + phosphate. Its pathway is metabolic intermediate biosynthesis; chorismate biosynthesis; chorismate from D-erythrose 4-phosphate and phosphoenolpyruvate: step 1/7. Functionally, involved in the production of volatile organic compounds (VOCs), including floral volatile benzenoids and phenylpropanoids (FVBP), in flowers of fragrant cultivars (e.g. cv. Mitchell and cv. V26), scent attracting pollinators (e.g. the night-active hawkmoth pollinator Manduca sexta). Catalyzes an aldol-like condensation reaction between phosphoenolpyruvate (PEP) and D-erythrose 4-phosphate (E4P) to generate 3-deoxy-D-arabino-heptulosonate 7-phosphate (DAH7P) and inorganic phosphate. The protein is Phospho-2-dehydro-3-deoxyheptonate aldolase 1, chloroplastic of Petunia hybrida (Petunia).